The following is a 401-amino-acid chain: Succinyl-diaminopimelate desuccinylase (401 aa).

H71 is a Zn(2+) binding site. D73 is an active-site residue. D104 is a binding site for Zn(2+). The active-site Proton acceptor is E138. 3 residues coordinate Zn(2+): E139, E167, and H352.

Belongs to the peptidase M20A family. DapE subfamily. In terms of assembly, homodimer. Zn(2+) serves as cofactor. Requires Co(2+) as cofactor.

The enzyme catalyses N-succinyl-(2S,6S)-2,6-diaminopimelate + H2O = (2S,6S)-2,6-diaminopimelate + succinate. Its pathway is amino-acid biosynthesis; L-lysine biosynthesis via DAP pathway; LL-2,6-diaminopimelate from (S)-tetrahydrodipicolinate (succinylase route): step 3/3. Its function is as follows. Catalyzes the hydrolysis of N-succinyl-L,L-diaminopimelic acid (SDAP), forming succinate and LL-2,6-diaminopimelate (DAP), an intermediate involved in the bacterial biosynthesis of lysine and meso-diaminopimelic acid, an essential component of bacterial cell walls. In Wolbachia sp. subsp. Brugia malayi (strain TRS), this protein is Succinyl-diaminopimelate desuccinylase.